The following is a 575-amino-acid chain: DNA mismatch repair protein MutL (575 aa).

Belongs to the DNA mismatch repair MutL/HexB family.

Functionally, this protein is involved in the repair of mismatches in DNA. It is required for dam-dependent methyl-directed DNA mismatch repair. May act as a 'molecular matchmaker', a protein that promotes the formation of a stable complex between two or more DNA-binding proteins in an ATP-dependent manner without itself being part of a final effector complex. The polypeptide is DNA mismatch repair protein MutL (Coxiella burnetii (strain CbuG_Q212) (Coxiella burnetii (strain Q212))).